We begin with the raw amino-acid sequence, 526 residues long: Glucose-6-phosphate isomerase (526 aa).

The active-site Proton donor is Glu-343. Residues His-374 and Lys-494 contribute to the active site.

The protein belongs to the GPI family.

The protein localises to the cytoplasm. The catalysed reaction is alpha-D-glucose 6-phosphate = beta-D-fructose 6-phosphate. It functions in the pathway carbohydrate biosynthesis; gluconeogenesis. The protein operates within carbohydrate degradation; glycolysis; D-glyceraldehyde 3-phosphate and glycerone phosphate from D-glucose: step 2/4. Its function is as follows. Catalyzes the reversible isomerization of glucose-6-phosphate to fructose-6-phosphate. The sequence is that of Glucose-6-phosphate isomerase from Dechloromonas aromatica (strain RCB).